The primary structure comprises 171 residues: Probable deoxyuridine 5'-triphosphate nucleotidohydrolase (171 aa).

Belongs to the dCTP deaminase family. Archaeal dUTPase subfamily.

It catalyses the reaction dUTP + H2O = dUMP + diphosphate + H(+). It participates in pyrimidine metabolism; dUMP biosynthesis; dUMP from dCTP (dUTP route): step 2/2. In terms of biological role, this enzyme is involved in nucleotide metabolism: it produces dUMP, the immediate precursor of thymidine nucleotides and it decreases the intracellular concentration of dUTP so that uracil cannot be incorporated into DNA. The sequence is that of Probable deoxyuridine 5'-triphosphate nucleotidohydrolase from Methanosarcina mazei (strain ATCC BAA-159 / DSM 3647 / Goe1 / Go1 / JCM 11833 / OCM 88) (Methanosarcina frisia).